Reading from the N-terminus, the 380-residue chain is Putative glutamate--cysteine ligase 2-2 (380 aa).

The protein belongs to the glutamate--cysteine ligase type 2 family. YbdK subfamily.

It catalyses the reaction L-cysteine + L-glutamate + ATP = gamma-L-glutamyl-L-cysteine + ADP + phosphate + H(+). Its function is as follows. ATP-dependent carboxylate-amine ligase which exhibits weak glutamate--cysteine ligase activity. This Nocardia farcinica (strain IFM 10152) protein is Putative glutamate--cysteine ligase 2-2.